The sequence spans 783 residues: Probable potassium transporter 2 (783 aa).

Residues 1–21 (MDAEAGVGGADQLPWRQHYRN) lie on the Cytoplasmic side of the membrane. Residues 22-42 (LLLLAYQSFGVVYGDLSTSPL) traverse the membrane as a helical segment. Over 43–61 (YVYKSTFSGRLRRYQDEQT) the chain is Extracellular. The helical transmembrane segment at 62 to 82 (VFGVLSLIFWTFTLIPLLKYV) threads the bilayer. Topologically, residues 83–152 (TIVLSADDNG…FMEKHKNART (70 aa)) are cytoplasmic. A helical membrane pass occupies residues 153–173 (VLLLIVLCGASMMIGDGILTP). Over 174–189 (AISVLSSMSGLKVRAT) the chain is Extracellular. The helical transmembrane segment at 190-210 (GLHDRSVVLLSCIVLVGLFAL) threads the bilayer. The Cytoplasmic segment spans residues 211–217 (QHRGTQK). A helical transmembrane segment spans residues 218–238 (VAFMFAPIVVIWLFCIGGIGL). The Extracellular portion of the chain corresponds to 239-268 (YNIIHWNPRIYQALSPYYIVKFFRTTGKDG). A helical transmembrane segment spans residues 269–289 (WIALGGILLSMTGCEAMFADL). At 290-298 (GHFTSASVR) the chain is on the cytoplasmic side. A helical membrane pass occupies residues 299-319 (LAFITIIYPCLILQYMGQAAF). The Extracellular segment spans residues 320–338 (LSKNILDMPTGFYDSIPGP). Residues 339-359 (IFWPVFVVATLAAVVGSQAVI) form a helical membrane-spanning segment. Topologically, residues 360–390 (SATFSIVKQCHSLGCFPRVKVVHTSRWIYGQ) are cytoplasmic. Residues 391 to 411 (IYIPEINWILMVLCVAVTVAF) form a helical membrane-spanning segment. Over 412 to 422 (RDITLIGNAYG) the chain is Extracellular. The chain crosses the membrane as a helical span at residues 423–443 (VACMTVMFVTTFLMALIMIFV). The Cytoplasmic segment spans residues 444-447 (WQKN). Residues 448-468 (IIFALSFFLLFGSVEVVYLSS) form a helical membrane-spanning segment. The Extracellular portion of the chain corresponds to 469–475 (SLMKVTQ). The helical transmembrane segment at 476-496 (GGWVPLVLALIFMSVMYIWHY) threads the bilayer. Residues 497 to 783 (GTRKKYQYDL…LIEVGMAYQV (287 aa)) lie on the Cytoplasmic side of the membrane. Residues 662–691 (DLADSMTMRSTKSESLRSLQSSYEQESPNV) form a disordered region. Positions 677–691 (LRSLQSSYEQESPNV) are enriched in polar residues.

It belongs to the HAK/KUP transporter (TC 2.A.72.3) family.

It is found in the cell membrane. It carries out the reaction K(+)(in) = K(+)(out). The catalysed reaction is Na(+)(in) = Na(+)(out). Its function is as follows. High-affinity potassium transporter. Can transport sodium under high sodium and low potassium concentrations in the extracellular environment. The sequence is that of Probable potassium transporter 2 (HAK2) from Oryza sativa subsp. japonica (Rice).